The sequence spans 274 residues: 3-methyl-2-oxobutanoate hydroxymethyltransferase (274 aa).

2 residues coordinate Mg(2+): Asp-49 and Asp-88. Residues 49–50, Asp-88, and Lys-118 contribute to the 3-methyl-2-oxobutanoate site; that span reads DS. Glu-120 provides a ligand contact to Mg(2+). The Proton acceptor role is filled by Glu-187.

The protein belongs to the PanB family. In terms of assembly, homodecamer; pentamer of dimers. The cofactor is Mg(2+).

The protein resides in the cytoplasm. It carries out the reaction 3-methyl-2-oxobutanoate + (6R)-5,10-methylene-5,6,7,8-tetrahydrofolate + H2O = 2-dehydropantoate + (6S)-5,6,7,8-tetrahydrofolate. Its pathway is cofactor biosynthesis; (R)-pantothenate biosynthesis; (R)-pantoate from 3-methyl-2-oxobutanoate: step 1/2. Its function is as follows. Catalyzes the reversible reaction in which hydroxymethyl group from 5,10-methylenetetrahydrofolate is transferred onto alpha-ketoisovalerate to form ketopantoate. The protein is 3-methyl-2-oxobutanoate hydroxymethyltransferase of Parvibaculum lavamentivorans (strain DS-1 / DSM 13023 / NCIMB 13966).